The chain runs to 257 residues: Phosphonates import ATP-binding protein PhnC (257 aa).

The ABC transporter domain occupies 4 to 248; that stretch reads IEFKNVSKVY…IFSEIYGRTI (245 aa). 37–44 is a binding site for ATP; sequence GLSGAGKS.

The protein belongs to the ABC transporter superfamily. Phosphonates importer (TC 3.A.1.9.1) family. As to quaternary structure, the complex is composed of two ATP-binding proteins (PhnC), two transmembrane proteins (PhnE) and a solute-binding protein (PhnD).

The protein resides in the cell membrane. It catalyses the reaction phosphonate(out) + ATP + H2O = phosphonate(in) + ADP + phosphate + H(+). Its function is as follows. Part of the ABC transporter complex PhnCDE involved in phosphonates import. Responsible for energy coupling to the transport system. In Staphylococcus aureus (strain bovine RF122 / ET3-1), this protein is Phosphonates import ATP-binding protein PhnC.